Here is a 581-residue protein sequence, read N- to C-terminus: Transcription factor GTE2 (581 aa).

The disordered stretch occupies residues 130-153 (VKKTKTKKKKIGHGQKRSNPFATD). Residues 131–145 (KKTKTKKKKIGHGQK) are compositionally biased toward basic residues. The Bromo domain maps to 169 to 275 (KVLKSMMTTC…SQFDVWFNPT (107 aa)). 2 disordered regions span residues 329–399 (PLLP…KREM) and 470–581 (KRQG…KEAP). The span at 346–365 (PSPPPSPVQPPPPPSPPPQP) shows a compositional bias: pro residues. The region spanning 389–470 (PKAKDPNKRE…NYRKMASKIK (82 aa)) is the NET domain. 2 stretches are compositionally biased toward basic and acidic residues: residues 390–399 (KAKDPNKREM) and 493–503 (SAEKRGRKGGE). The segment covering 504–517 (AGEEDVDIGEDIPV) has biased composition (acidic residues). Over residues 530–564 (TAAAASGGSSSSGSFSSSGSSSSSDSESGSSSGSD) the composition is skewed to low complexity.

The protein resides in the nucleus. This chain is Transcription factor GTE2 (GTE2), found in Arabidopsis thaliana (Mouse-ear cress).